The chain runs to 438 residues: Aspartate--tRNA(Asp) ligase (438 aa).

Residue E170 participates in L-aspartate binding. Positions Q192–K195 are aspartate. R214 is a binding site for L-aspartate. ATP is bound by residues R214–E216, R222–L224, and E361. The Mg(2+) site is built by E361 and S364. L-aspartate is bound by residues S364 and R368. Position 409-412 (G409–R412) interacts with ATP.

Belongs to the class-II aminoacyl-tRNA synthetase family. Type 2 subfamily. Homodimer. Mg(2+) is required as a cofactor.

The protein localises to the cytoplasm. It catalyses the reaction tRNA(Asp) + L-aspartate + ATP = L-aspartyl-tRNA(Asp) + AMP + diphosphate. Its function is as follows. Catalyzes the attachment of L-aspartate to tRNA(Asp) in a two-step reaction: L-aspartate is first activated by ATP to form Asp-AMP and then transferred to the acceptor end of tRNA(Asp). Is specific for tRNA(Asp) since it aspartylates tRNA(Asn) 3 orders of magnitude less efficiently than tRNA(Asp). The chain is Aspartate--tRNA(Asp) ligase from Thermococcus kodakarensis (strain ATCC BAA-918 / JCM 12380 / KOD1) (Pyrococcus kodakaraensis (strain KOD1)).